The primary structure comprises 605 residues: Capsid scaffolding protein (605 aa).

Catalysis depends on charge relay system residues H48, S116, and H139. Residues 235-274 (ASDAPDLQKPDKALQSPPPASTDPATMLSGNAGEGATACG) are disordered. The interaction with pAP stretch occupies residues 281–300 (QDLISVPRNTFMTLLQTNLD). Disordered stretches follow at residues 403–432 (DYVP…PGED) and 489–588 (PHQS…KSVS). The short motif at 410–416 (RSNKRKR) is the Nuclear localization signal element. The span at 568–579 (ASASGVAQSKEP) shows a compositional bias: polar residues. The segment at 585–605 (KSVSAHLKSIFCEELLNKRVA) is interaction with major capsid protein.

The protein belongs to the herpesviridae capsid scaffolding protein family. In terms of assembly, homomultimer. Interacts with major capsid protein. As to quaternary structure, exists in a monomer-dimer equilibrium with the dimer being the active species. Post-translationally, capsid scaffolding protein is cleaved by assemblin after formation of the spherical procapsid. As a result, the capsid obtains its mature, icosahedral shape. Cleavages occur at two or more sites: release (R-site) and maturation (M-site).

It localises to the host cytoplasm. Its subcellular location is the host nucleus. It carries out the reaction Cleaves -Ala-|-Ser- and -Ala-|-Ala- bonds in the scaffold protein.. In terms of biological role, acts as a scaffold protein by binding major capsid protein in the cytoplasm, inducing the nuclear localization of both proteins. Multimerizes in the nucleus such as major capsid protein forms the icosahedral T=16 capsid. Autocatalytic cleavage releases the assembly protein, and subsequently abolishes interaction with major capsid protein. Cleavages products are evicted from the capsid before or during DNA packaging. Functionally, protease that plays an essential role in virion assembly within the nucleus. Catalyzes the cleavage of the assembly protein after formation of the spherical procapsid. By that cleavage, the capsid matures and gains its icosahedral shape. The cleavage sites seem to include -Ala-Ser-, -Ala-Ala-, as well as Ala-Thr bonds. Assemblin and cleavages products are evicted from the capsid before or during DNA packaging. Its function is as follows. Plays a major role in capsid assembly. Acts as a scaffold protein by binding major capsid protein. Multimerizes in the nucleus such as major capsid protein forms the icosahedral T=16 capsid. Cleaved by assemblin after capsid completion. The cleavages products are evicted from the capsid before or during DNA packaging. This chain is Capsid scaffolding protein, found in Homo sapiens (Human).